A 160-amino-acid polypeptide reads, in one-letter code: Ribonuclease H (160 aa).

The RNase H type-1 domain occupies 1-157 (MNIEIYTDGA…CDRLAVEACQ (157 aa)). Residues Asp8, Glu49, Asp85, and Asp149 each contribute to the Mg(2+) site.

The protein belongs to the RNase H family. Monomer. Mg(2+) is required as a cofactor.

Its subcellular location is the cytoplasm. It carries out the reaction Endonucleolytic cleavage to 5'-phosphomonoester.. Its function is as follows. Endonuclease that specifically degrades the RNA of RNA-DNA hybrids. This is Ribonuclease H from Treponema denticola (strain ATCC 35405 / DSM 14222 / CIP 103919 / JCM 8153 / KCTC 15104).